A 361-amino-acid polypeptide reads, in one-letter code: 3-dehydroquinate synthase (361 aa).

Residues 107-111 (GVIGD), 131-132 (TS), Lys-144, and Lys-153 each bind NAD(+). Glu-186, His-251, and His-268 together coordinate Zn(2+).

This sequence belongs to the sugar phosphate cyclases superfamily. Dehydroquinate synthase family. It depends on NAD(+) as a cofactor. The cofactor is Co(2+). Requires Zn(2+) as cofactor.

The protein localises to the cytoplasm. It carries out the reaction 7-phospho-2-dehydro-3-deoxy-D-arabino-heptonate = 3-dehydroquinate + phosphate. It participates in metabolic intermediate biosynthesis; chorismate biosynthesis; chorismate from D-erythrose 4-phosphate and phosphoenolpyruvate: step 2/7. In terms of biological role, catalyzes the conversion of 3-deoxy-D-arabino-heptulosonate 7-phosphate (DAHP) to dehydroquinate (DHQ). This Synechocystis sp. (strain ATCC 27184 / PCC 6803 / Kazusa) protein is 3-dehydroquinate synthase.